The following is a 196-amino-acid chain: ATP-dependent Clp protease proteolytic subunit (196 aa).

Catalysis depends on Ser99, which acts as the Nucleophile. The active site involves His124.

Belongs to the peptidase S14 family. Fourteen ClpP subunits assemble into 2 heptameric rings which stack back to back to give a disk-like structure with a central cavity, resembling the structure of eukaryotic proteasomes.

The protein localises to the cytoplasm. The catalysed reaction is Hydrolysis of proteins to small peptides in the presence of ATP and magnesium. alpha-casein is the usual test substrate. In the absence of ATP, only oligopeptides shorter than five residues are hydrolyzed (such as succinyl-Leu-Tyr-|-NHMec, and Leu-Tyr-Leu-|-Tyr-Trp, in which cleavage of the -Tyr-|-Leu- and -Tyr-|-Trp bonds also occurs).. Cleaves peptides in various proteins in a process that requires ATP hydrolysis. Has a chymotrypsin-like activity. Plays a major role in the degradation of misfolded proteins. This Campylobacter lari (strain RM2100 / D67 / ATCC BAA-1060) protein is ATP-dependent Clp protease proteolytic subunit.